The primary structure comprises 165 residues: Small ribosomal subunit protein uS5 (165 aa).

One can recognise an S5 DRBM domain in the interval 10–73 (LNEKLIAVNR…EKARRNMVTV (64 aa)).

The protein belongs to the universal ribosomal protein uS5 family. Part of the 30S ribosomal subunit. Contacts proteins S4 and S8.

Functionally, with S4 and S12 plays an important role in translational accuracy. Its function is as follows. Located at the back of the 30S subunit body where it stabilizes the conformation of the head with respect to the body. The chain is Small ribosomal subunit protein uS5 from Photobacterium profundum (strain SS9).